We begin with the raw amino-acid sequence, 211 residues long: Proteasome subunit beta (211 aa).

Residues 1-9 (MSEAETLKG) constitute a propeptide, removed in mature form; by autocatalysis. Residue T10 is the Nucleophile of the active site.

Belongs to the peptidase T1B family. The 20S proteasome core is composed of 14 alpha and 14 beta subunits that assemble into four stacked heptameric rings, resulting in a barrel-shaped structure. The two inner rings, each composed of seven catalytic beta subunits, are sandwiched by two outer rings, each composed of seven alpha subunits. The catalytic chamber with the active sites is on the inside of the barrel. Has a gated structure, the ends of the cylinder being occluded by the N-termini of the alpha-subunits. Is capped at one or both ends by the proteasome regulatory ATPase, PAN.

It is found in the cytoplasm. It catalyses the reaction Cleavage of peptide bonds with very broad specificity.. With respect to regulation, the formation of the proteasomal ATPase PAN-20S proteasome complex, via the docking of the C-termini of PAN into the intersubunit pockets in the alpha-rings, triggers opening of the gate for substrate entry. Interconversion between the open-gate and close-gate conformations leads to a dynamic regulation of the 20S proteasome proteolysis activity. In terms of biological role, component of the proteasome core, a large protease complex with broad specificity involved in protein degradation. The chain is Proteasome subunit beta from Methanosphaerula palustris (strain ATCC BAA-1556 / DSM 19958 / E1-9c).